The sequence spans 319 residues: tRNA(Ile)-lysidine synthase (319 aa).

32–37 (SGGSDS) provides a ligand contact to ATP.

Belongs to the tRNA(Ile)-lysidine synthase family.

Its subcellular location is the cytoplasm. It catalyses the reaction cytidine(34) in tRNA(Ile2) + L-lysine + ATP = lysidine(34) in tRNA(Ile2) + AMP + diphosphate + H(+). Functionally, ligates lysine onto the cytidine present at position 34 of the AUA codon-specific tRNA(Ile) that contains the anticodon CAU, in an ATP-dependent manner. Cytidine is converted to lysidine, thus changing the amino acid specificity of the tRNA from methionine to isoleucine. This chain is tRNA(Ile)-lysidine synthase, found in Chlamydia pneumoniae (Chlamydophila pneumoniae).